The chain runs to 431 residues: tRNA(Ile)-lysidine synthase (431 aa).

An ATP-binding site is contributed by 19-24 (STGIDS).

It belongs to the tRNA(Ile)-lysidine synthase family.

It is found in the cytoplasm. It catalyses the reaction cytidine(34) in tRNA(Ile2) + L-lysine + ATP = lysidine(34) in tRNA(Ile2) + AMP + diphosphate + H(+). Functionally, ligates lysine onto the cytidine present at position 34 of the AUA codon-specific tRNA(Ile) that contains the anticodon CAU, in an ATP-dependent manner. Cytidine is converted to lysidine, thus changing the amino acid specificity of the tRNA from methionine to isoleucine. The chain is tRNA(Ile)-lysidine synthase from Staphylococcus aureus (strain MRSA252).